A 381-amino-acid polypeptide reads, in one-letter code: tRNA (guanine(6)-N2)-methyltransferase (381 aa).

Residues 43 to 157 (KLIPKINYLS…FDELIVGIDT (115 aa)) form the THUMP domain. S-adenosyl-L-methionine is bound by residues 173–177 (HPAHL), 204–206 (SGT), D261, 289–290 (DA), and N306.

This sequence belongs to the methyltransferase superfamily.

It localises to the cytoplasm. It carries out the reaction guanosine(6) in tRNA + S-adenosyl-L-methionine = N(2)-methylguanosine(6) in tRNA + S-adenosyl-L-homocysteine + H(+). S-adenosyl-L-methionine-dependent methyltransferase that catalyzes the methylation of the guanosine nucleotide at position 6 (m2G6) in tRNA(Cys). This Methanocaldococcus jannaschii (strain ATCC 43067 / DSM 2661 / JAL-1 / JCM 10045 / NBRC 100440) (Methanococcus jannaschii) protein is tRNA (guanine(6)-N2)-methyltransferase.